Here is a 350-residue protein sequence, read N- to C-terminus: MRVYSPGRVNLIGEHTDYSYGYVLPMAIDRYTVIEGEPHERVELYSEHFKKSVSFELEKLEKGNNWADYVKGVYWVLQREGYEVGGMKGRVGGNLPLGSGLSSSASFELAVLAFLNEAYSLKLSRLDMALLAKKAENEFVGVPCGILDQFAIAFGREGKAIFLDTETLDYEYLPFPEDLEVLVFYTGVKRELASSAYAERKKAIEEALRVLGKSSSKYVTEEELSKLPEKERRYLGYVVRENSRVLAFRDALKEGDVEAMGQLMVEAHRDIAENYRVSCEELDFFVEKALELGALGARLTGAGFGGSAIALVEHGKGESLGREVAELYTKVFPWTPEVFVVRPSEGVMVL.

A substrate-binding site is contributed by 14–17 (EHTD). ATP contacts are provided by residues serine 46 and 98–104 (GSGLSSS). Mg(2+)-binding residues include serine 104 and glutamate 136. The Proton acceptor role is filled by aspartate 148. Tyrosine 197 provides a ligand contact to substrate.

Belongs to the GHMP kinase family. GalK subfamily.

The protein resides in the cytoplasm. The enzyme catalyses alpha-D-galactose + ATP = alpha-D-galactose 1-phosphate + ADP + H(+). Its pathway is carbohydrate metabolism; galactose metabolism. Functionally, catalyzes the transfer of the gamma-phosphate of ATP to D-galactose to form alpha-D-galactose-1-phosphate (Gal-1-P). The sequence is that of Galactokinase from Thermococcus kodakarensis (strain ATCC BAA-918 / JCM 12380 / KOD1) (Pyrococcus kodakaraensis (strain KOD1)).